A 343-amino-acid chain; its full sequence is Sodium/bile acid cotransporter 7-B (343 aa).

Topologically, residues 1–9 are cytoplasmic; it reads MGLLERLRK. A helical membrane pass occupies residues 10–30; the sequence is EWFIIGIILVIVAAKLEPTIG. At 31-37 the chain is on the extracellular side; the sequence is EKGGPLK. Residues 38–58 traverse the membrane as a helical segment; that stretch reads PEITITYIAVSAIFFNSGLSL. Topologically, residues 59–71 are cytoplasmic; sequence KTEELTNALMHVK. A helical transmembrane segment spans residues 72-92; that stretch reads LHLFVQLFTLVFFPTAIWIFL. At 93–116 the chain is on the extracellular side; sequence QVLSLTPINEWLLKGLQTVSCMPP. The helical transmembrane segment at 117-137 threads the bilayer; the sequence is PVSSAVILTKAVGGNEAAAIF. Asn138 is a topological domain (cytoplasmic). A helical membrane pass occupies residues 139-159; that stretch reads SAFGSFLGIVVTPLLLLLFLG. At 160-163 the chain is on the extracellular side; that stretch reads SSSS. Residues 164–184 traverse the membrane as a helical segment; sequence VPFTSIFSQLFMTVVVPLIIG. Over 185-201 the chain is Cytoplasmic; that stretch reads QIVRRYIKDWLERKKPP. A helical transmembrane segment spans residues 202 to 222; the sequence is FGAISSCVLLMIIYTTFCDTF. Residues 223-234 are Extracellular-facing; sequence SNPNIDLDTFSL. A helical membrane pass occupies residues 235-255; that stretch reads VVIVFIIFFIQLAFMLLTFLF. Residues 256–270 lie on the Cytoplasmic side of the membrane; the sequence is STSKNSGFTPADTVA. The chain crosses the membrane as a helical span at residues 271 to 291; the sequence is IVFCSTHKSLTLGIPMLKIVF. Residues 292–298 lie on the Extracellular side of the membrane; that stretch reads AGYEHLS. Residues 299 to 319 traverse the membrane as a helical segment; sequence LISVPLLIYHPAQILLGSVLV. The Cytoplasmic portion of the chain corresponds to 320-343; that stretch reads PTIKSWMLSRRKALKLTRQPKIPL.

This sequence belongs to the bile acid:sodium symporter (BASS) (TC 2.A.28) family.

It localises to the cell membrane. It is found in the endoplasmic reticulum membrane. Its subcellular location is the golgi apparatus membrane. Functionally, involved in teeth and skeletal development. Has an essential role in the biosynthesis and trafficking of glycosaminoglycans and glycoproteins to produce a proper functioning extracellular matrix. Required for extracellular matrix mineralization. Also involved in the regulation of cellular calcium homeostasis. Does not show transport activity towards bile acids or steroid sulfates. The protein is Sodium/bile acid cotransporter 7-B (slc10a7-b) of Xenopus laevis (African clawed frog).